We begin with the raw amino-acid sequence, 129 residues long: NADPH-dependent 7-cyano-7-deazaguanine reductase (129 aa).

The active-site Thioimide intermediate is the C42. D49 serves as the catalytic Proton donor. Residues 64 to 66 (VEL) and 83 to 84 (HE) contribute to the substrate site.

It belongs to the GTP cyclohydrolase I family. QueF type 1 subfamily.

Its subcellular location is the cytoplasm. The catalysed reaction is 7-aminomethyl-7-carbaguanine + 2 NADP(+) = 7-cyano-7-deazaguanine + 2 NADPH + 3 H(+). The protein operates within tRNA modification; tRNA-queuosine biosynthesis. Its function is as follows. Catalyzes the NADPH-dependent reduction of 7-cyano-7-deazaguanine (preQ0) to 7-aminomethyl-7-deazaguanine (preQ1). This chain is NADPH-dependent 7-cyano-7-deazaguanine reductase, found in Synechococcus sp. (strain CC9605).